The sequence spans 25 residues: Neuromedin-U-25 (25 aa).

Asn25 is subject to Asparagine amide.

It belongs to the NmU family.

Its subcellular location is the secreted. Stimulates uterine smooth muscle contraction and causes selective vasoconstriction. This Sus scrofa (Pig) protein is Neuromedin-U-25 (NMU).